A 294-amino-acid polypeptide reads, in one-letter code: Phosphatidylserine decarboxylase proenzyme (294 aa).

Catalysis depends on charge relay system; for autoendoproteolytic cleavage activity residues D88, H145, and S248. S248 (schiff-base intermediate with substrate; via pyruvic acid; for decarboxylase activity) is an active-site residue. Position 248 is a pyruvic acid (Ser); by autocatalysis (S248).

It belongs to the phosphatidylserine decarboxylase family. PSD-B subfamily. Prokaryotic type I sub-subfamily. In terms of assembly, heterodimer of a large membrane-associated beta subunit and a small pyruvoyl-containing alpha subunit. Requires pyruvate as cofactor. Is synthesized initially as an inactive proenzyme. Formation of the active enzyme involves a self-maturation process in which the active site pyruvoyl group is generated from an internal serine residue via an autocatalytic post-translational modification. Two non-identical subunits are generated from the proenzyme in this reaction, and the pyruvate is formed at the N-terminus of the alpha chain, which is derived from the carboxyl end of the proenzyme. The autoendoproteolytic cleavage occurs by a canonical serine protease mechanism, in which the side chain hydroxyl group of the serine supplies its oxygen atom to form the C-terminus of the beta chain, while the remainder of the serine residue undergoes an oxidative deamination to produce ammonia and the pyruvoyl prosthetic group on the alpha chain. During this reaction, the Ser that is part of the protease active site of the proenzyme becomes the pyruvoyl prosthetic group, which constitutes an essential element of the active site of the mature decarboxylase.

It is found in the cell membrane. The catalysed reaction is a 1,2-diacyl-sn-glycero-3-phospho-L-serine + H(+) = a 1,2-diacyl-sn-glycero-3-phosphoethanolamine + CO2. It participates in phospholipid metabolism; phosphatidylethanolamine biosynthesis; phosphatidylethanolamine from CDP-diacylglycerol: step 2/2. Its function is as follows. Catalyzes the formation of phosphatidylethanolamine (PtdEtn) from phosphatidylserine (PtdSer). This chain is Phosphatidylserine decarboxylase proenzyme, found in Herminiimonas arsenicoxydans.